A 292-amino-acid chain; its full sequence is MCTAVRQDLSLKCGGTDVKQPGDSQPGHLRALLGFTLPSVYASDSSTQILPKHIGKPEFPDTGWDRIKDLFYNVEGQYTEELRNVVKSGIASAIVGMIYGGLPGARHARQRFIQCSQAEIYRNRVDAVRAAHNAAIRGFLRFGWRWSWRVAAFVTLFNTVNTGLTVYRDQNALSHFAVSGAVTGGVFRLNLGLRGLLSGTIIGVILGFPAGVLILGLQNLGGETMRDKRRRERRELHELRVTEWNARLKVTDDLIGEMSSLKHQDSEIDLQQVEELLSQPRNGNAAKGPYNQ.

2 consecutive transmembrane segments (helical) span residues 146–168 (WSWR…TVYR) and 195–215 (GLLS…VLIL).

Belongs to the Tim17/Tim22/Tim23 family. As to quaternary structure, associates with the intermediate 315 kDa subcomplex of incompletely assembled complex I.

Its subcellular location is the mitochondrion membrane. Chaperone protein involved in the assembly of the mitochondrial NADH:ubiquinone oxidoreductase complex (complex I). Participates in constructing the membrane arm of complex I. This Danio rerio (Zebrafish) protein is Complex I assembly factor TIMMDC1, mitochondrial (timmdc1).